Here is a 318-residue protein sequence, read N- to C-terminus: Myoblast determination protein 1 (318 aa).

Residue Met-1 forms a Peptide (Met-Gly) (interchain with G-Cter in ubiquitin) linkage. Lys-104 carries the post-translational modification N6-methyllysine; by EHMT2. The bHLH domain occupies 109–160 (DRRKAATMRERRRLSKVNEAFETLKRCTSSNPNQRLPKVEILRNAIRYIEGL). 2 disordered regions span residues 174–224 (AAAA…RRRN) and 266–318 (APAL…YQVL). Polar residues predominate over residues 197 to 207 (SDASSPRSNCS). Low complexity predominate over residues 266 to 276 (APALLLADAPP).

As to quaternary structure, efficient DNA binding requires dimerization with another bHLH protein. Seems to form active heterodimers with ITF-2. Interacts with SUV39H1. Interacts with DDX5. Interacts with CHD2. Interacts with TSC22D3. Interacts with SETD3. Interacts with P-TEFB complex; promotes the transcriptional activity of MYOD1 through its CDK9-mediated phosphorylation. Interacts with CSRP3. Interacts with NUPR1. In terms of processing, phosphorylated by CDK9. This phosphorylation promotes its function in muscle differentiation. Acetylated by a complex containing EP300 and PCAF. The acetylation is essential to activate target genes. Conversely, its deacetylation by SIRT1 inhibits its function. Post-translationally, ubiquitinated on the N-terminus; which is required for proteasomal degradation. In terms of processing, methylation at Lys-104 by EHMT2/G9a inhibits myogenic activity.

The protein localises to the nucleus. Acts as a transcriptional activator that promotes transcription of muscle-specific target genes and plays a role in muscle differentiation. Together with MYF5 and MYOG, co-occupies muscle-specific gene promoter core region during myogenesis. Induces fibroblasts to differentiate into myoblasts. Interacts with and is inhibited by the twist protein. This interaction probably involves the basic domains of both proteins. This Bos taurus (Bovine) protein is Myoblast determination protein 1 (MYOD1).